Consider the following 268-residue polypeptide: tRNA pseudouridine synthase A (268 aa).

Catalysis depends on aspartate 52, which acts as the Nucleophile. Tyrosine 113 contacts substrate.

It belongs to the tRNA pseudouridine synthase TruA family. As to quaternary structure, homodimer.

The catalysed reaction is uridine(38/39/40) in tRNA = pseudouridine(38/39/40) in tRNA. In terms of biological role, formation of pseudouridine at positions 38, 39 and 40 in the anticodon stem and loop of transfer RNAs. The protein is tRNA pseudouridine synthase A of Rhizobium leguminosarum bv. trifolii (strain WSM2304).